We begin with the raw amino-acid sequence, 231 residues long: Ion-translocating oxidoreductase complex subunit E (231 aa).

The next 6 membrane-spanning stretches (helical) occupy residues 18-38 (ALVQ…ATNA), 39-59 (LGLG…ISTL), 63-83 (TPAE…VSAV), 86-106 (LINA…PLIV), 125-145 (ALSA…MFVL), and 182-202 (PFLL…MLAG).

It belongs to the NqrDE/RnfAE family. In terms of assembly, the complex is composed of six subunits: RsxA, RsxB, RsxC, RsxD, RsxE and RsxG.

It localises to the cell inner membrane. Its function is as follows. Part of a membrane-bound complex that couples electron transfer with translocation of ions across the membrane. Required to maintain the reduced state of SoxR. The sequence is that of Ion-translocating oxidoreductase complex subunit E from Escherichia coli (strain SE11).